A 27-amino-acid chain; its full sequence is Delta-conotoxin TsVIA (27 aa).

3 cysteine pairs are disulfide-bonded: cysteine 1–cysteine 17, cysteine 8–cysteine 21, and cysteine 16–cysteine 25.

The protein belongs to the conotoxin O1 superfamily. In terms of tissue distribution, expressed by the venom duct.

The protein localises to the secreted. In terms of biological role, delta-conotoxins bind to site 6 of voltage-gated sodium channels (Nav) and inhibit the inactivation process. This toxin inhibits tetrodotoxin(TTX)-sensitive sodium channels. A test on mouse Nav1.6/SCN8A confirms this sensitivity. The protein is Delta-conotoxin TsVIA of Conus tessulatus (Tessellate cone).